We begin with the raw amino-acid sequence, 758 residues long: Catalase-peroxidase (758 aa).

Residues Met-1–Val-10 show a composition bias toward polar residues. The interval Met-1–Arg-57 is disordered. The tryptophyl-tyrosyl-methioninium (Trp-Tyr) (with M-276) cross-link spans Trp-128–Tyr-250. His-129 (proton acceptor) is an active-site residue. The segment at residues Tyr-250–Met-276 is a cross-link (tryptophyl-tyrosyl-methioninium (Tyr-Met) (with W-128)). His-291 serves as a coordination point for heme b.

It belongs to the peroxidase family. Peroxidase/catalase subfamily. Homodimer or homotetramer. It depends on heme b as a cofactor. Formation of the three residue Trp-Tyr-Met cross-link is important for the catalase, but not the peroxidase activity of the enzyme.

It carries out the reaction H2O2 + AH2 = A + 2 H2O. It catalyses the reaction 2 H2O2 = O2 + 2 H2O. In terms of biological role, bifunctional enzyme with both catalase and broad-spectrum peroxidase activity. This is Catalase-peroxidase from Salinispora tropica (strain ATCC BAA-916 / DSM 44818 / JCM 13857 / NBRC 105044 / CNB-440).